Here is a 224-residue protein sequence, read N- to C-terminus: N-terminal Xaa-Pro-Lys N-methyltransferase 1-A (224 aa).

S-adenosyl-L-methionine-binding positions include Gly70, Arg75, Asp92–Thr94, Leu120–Gln121, and Gln136.

It belongs to the methyltransferase superfamily. NTM1 family.

It localises to the nucleus. The catalysed reaction is N-terminal L-alanyl-L-prolyl-L-lysyl-[protein] + 3 S-adenosyl-L-methionine = N-terminal N,N,N-trimethyl-L-alanyl-L-prolyl-L-lysyl-[protein] + 3 S-adenosyl-L-homocysteine + 3 H(+). The enzyme catalyses N-terminal L-seryl-L-prolyl-L-lysyl-[protein] + 3 S-adenosyl-L-methionine = N-terminal N,N,N-trimethyl-L-seryl-L-prolyl-L-lysyl-[protein] + 3 S-adenosyl-L-homocysteine + 3 H(+). It carries out the reaction N-terminal L-prolyl-L-prolyl-L-lysyl-[protein] + 2 S-adenosyl-L-methionine = N-terminal N,N-dimethyl-L-prolyl-L-prolyl-L-lysyl-[protein] + 2 S-adenosyl-L-homocysteine + 2 H(+). Functionally, distributive alpha-N-methyltransferase that methylates the N-terminus of target proteins containing the N-terminal motif [Ala/Gly/Pro/Ser]-Pro-Lys when the initiator Met is cleaved. Specifically catalyzes mono-, di- or tri-methylation of the exposed alpha-amino group of the Ala, Gly or Ser residue in the [Ala/Gly/Ser]-Pro-Lys motif and mono- or di-methylation of Pro in the Pro-Pro-Lys motif. Required during mitosis for normal bipolar spindle formation and chromosome segregation via its action on target proteins. The protein is N-terminal Xaa-Pro-Lys N-methyltransferase 1-A (ntmt1-a) of Xenopus laevis (African clawed frog).